A 163-amino-acid polypeptide reads, in one-letter code: Calcium-binding protein I (163 aa).

3 EF-hand domains span residues 20 to 42 (DKNK…NSKN), 82 to 117 (KPEI…LGCG), and 118 to 153 (NSKK…LKQD). Ca(2+) is bound by residues D95, N97, D99, M101, E106, D131, N133, E135, S137, and D142.

The protein is Calcium-binding protein I (cbpI) of Dictyostelium discoideum (Social amoeba).